A 473-amino-acid chain; its full sequence is Fumarate hydratase class II (473 aa).

Substrate contacts are provided by residues 105–107 (SGT), 130–133 (HPND), 140–142 (SSN), and Thr-188. His-189 acts as the Proton donor/acceptor in catalysis. Residue Ser-319 is part of the active site. Substrate-binding positions include Ser-320 and 325-327 (KVN).

Belongs to the class-II fumarase/aspartase family. Fumarase subfamily. As to quaternary structure, homotetramer.

The protein localises to the cytoplasm. The catalysed reaction is (S)-malate = fumarate + H2O. Its pathway is carbohydrate metabolism; tricarboxylic acid cycle; (S)-malate from fumarate: step 1/1. In terms of biological role, involved in the TCA cycle. Catalyzes the stereospecific interconversion of fumarate to L-malate. This is Fumarate hydratase class II from Xylella fastidiosa (strain Temecula1 / ATCC 700964).